The chain runs to 101 residues: Aspartyl/glutamyl-tRNA(Asn/Gln) amidotransferase subunit C (101 aa).

Belongs to the GatC family. As to quaternary structure, heterotrimer of A, B and C subunits.

It catalyses the reaction L-glutamyl-tRNA(Gln) + L-glutamine + ATP + H2O = L-glutaminyl-tRNA(Gln) + L-glutamate + ADP + phosphate + H(+). The enzyme catalyses L-aspartyl-tRNA(Asn) + L-glutamine + ATP + H2O = L-asparaginyl-tRNA(Asn) + L-glutamate + ADP + phosphate + 2 H(+). Functionally, allows the formation of correctly charged Asn-tRNA(Asn) or Gln-tRNA(Gln) through the transamidation of misacylated Asp-tRNA(Asn) or Glu-tRNA(Gln) in organisms which lack either or both of asparaginyl-tRNA or glutaminyl-tRNA synthetases. The reaction takes place in the presence of glutamine and ATP through an activated phospho-Asp-tRNA(Asn) or phospho-Glu-tRNA(Gln). This is Aspartyl/glutamyl-tRNA(Asn/Gln) amidotransferase subunit C from Salinispora tropica (strain ATCC BAA-916 / DSM 44818 / JCM 13857 / NBRC 105044 / CNB-440).